A 275-amino-acid chain; its full sequence is Formamidopyrimidine-DNA glycosylase (275 aa).

Catalysis depends on Pro-2, which acts as the Schiff-base intermediate with DNA. The Proton donor role is filled by Glu-3. The active-site Proton donor; for beta-elimination activity is Lys-58. His-93, Arg-111, and Arg-156 together coordinate DNA. The FPG-type zinc-finger motif lies at 241 to 275 (FVYDRAGQPCRVCGTPIRQIVQGQRSTYYCPTCQR). Arg-265 (proton donor; for delta-elimination activity) is an active-site residue.

The protein belongs to the FPG family. In terms of assembly, monomer. Zn(2+) serves as cofactor.

The catalysed reaction is Hydrolysis of DNA containing ring-opened 7-methylguanine residues, releasing 2,6-diamino-4-hydroxy-5-(N-methyl)formamidopyrimidine.. The enzyme catalyses 2'-deoxyribonucleotide-(2'-deoxyribose 5'-phosphate)-2'-deoxyribonucleotide-DNA = a 3'-end 2'-deoxyribonucleotide-(2,3-dehydro-2,3-deoxyribose 5'-phosphate)-DNA + a 5'-end 5'-phospho-2'-deoxyribonucleoside-DNA + H(+). Functionally, involved in base excision repair of DNA damaged by oxidation or by mutagenic agents. Acts as a DNA glycosylase that recognizes and removes damaged bases. Has a preference for oxidized purines, such as 7,8-dihydro-8-oxoguanine (8-oxoG). Has AP (apurinic/apyrimidinic) lyase activity and introduces nicks in the DNA strand. Cleaves the DNA backbone by beta-delta elimination to generate a single-strand break at the site of the removed base with both 3'- and 5'-phosphates. This Burkholderia cenocepacia (strain ATCC BAA-245 / DSM 16553 / LMG 16656 / NCTC 13227 / J2315 / CF5610) (Burkholderia cepacia (strain J2315)) protein is Formamidopyrimidine-DNA glycosylase.